Consider the following 146-residue polypeptide: Transcriptional regulator AdcR (146 aa).

The HTH marR-type domain occupies 1-143 (MRQLAKDINA…IQRFLTALVG (143 aa)). Zn(2+) contacts are provided by glutamate 24, cysteine 30, glutamate 41, and histidine 42. A DNA-binding region (H-T-H motif) is located at residues 54 to 77 (NSELARRLNVSQAAVTKAIKSLVK). Zn(2+)-binding residues include glutamate 107, histidine 108, and histidine 112.

As to quaternary structure, homodimer.

Its activity is regulated as follows. Zinc acts as a coregulator and is required for DNA-binding activity. Its function is as follows. Zinc-responsive regulator that acts both as a repressor and as an activator by regulating directly the promoters of its target genes. In the presence of zinc, directly represses the expression of the adcRCBA operon, of genes coding for a group of surface antigen zinc-binding pneumococcal histidine triad proteins (PhtA, PhtB, PhtD and PhtE), and of adcAII. Can also activate expression of adh. The chain is Transcriptional regulator AdcR (adcR) from Streptococcus pneumoniae serotype 2 (strain D39 / NCTC 7466).